Reading from the N-terminus, the 56-residue chain is Large ribosomal subunit protein bL32 (56 aa).

This sequence belongs to the bacterial ribosomal protein bL32 family.

The sequence is that of Large ribosomal subunit protein bL32 from Synechococcus sp. (strain CC9311).